The following is a 498-amino-acid chain: Type II secretion system protein E (498 aa).

Zn(2+)-binding residues include Cys-394, Cys-397, Cys-425, and Cys-428.

Belongs to the GSP E family. Forms homooligomers; most probably hexamers. Interacts with OutL/GspL. Zn(2+) serves as cofactor.

It localises to the cell inner membrane. The catalysed reaction is ATP + H2O + cellular proteinSide 1 = ADP + phosphate + cellular proteinSide 2.. Its function is as follows. ATPase component of the type II secretion system required for the energy-dependent secretion of extracellular factors such as proteases and toxins from the periplasm. Acts as a molecular motor to provide the energy that is required for assembly of the pseudopilus and the extrusion of substrates generated in the cytoplasm. In Dickeya dadantii (strain 3937) (Erwinia chrysanthemi (strain 3937)), this protein is Type II secretion system protein E (outE).